A 2253-amino-acid polypeptide reads, in one-letter code: Genome polyprotein (2253 aa).

An intrachain disulfide couples Cys-627 to Cys-694. Residues Arg-750–Asp-752 carry the Cell attachment site motif. The 96-residue stretch at Leu-825–Gln-920 folds into the LRAT domain. Catalysis depends on for protein 2A H-NC residues His-835 and His-846. The active-site For protein 2A H-NC; Acyl-thioester intermediate is Cys-904. The helical transmembrane segment at Ile-1002–Val-1022 threads the bilayer. An SF3 helicase domain is found at Tyr-1205–Asp-1366. Tyr-1559 bears the O-(5'-phospho-RNA)-tyrosine mark. One can recognise a Peptidase C3 domain in the interval Ala-1586–Asn-1775. Residues His-1626, Asp-1664, and Cys-1739 each act as for protease 3C activity in the active site. The active-site Acyl-thioester intermediate is Cys-1970. A RdRp catalytic domain is found at Pro-2018–Tyr-2132. Mg(2+)-binding residues include Asp-2024 and Asp-2118.

This sequence belongs to the picornaviruses polyprotein family. Interacts with capsid protein VP1 and capsid protein VP3 to form heterotrimeric protomers. Five protomers subsequently associate to form pentamers which serve as building blocks for the capsid. In terms of assembly, interacts with capsid protein VP0, and capsid protein VP3 to form heterotrimeric protomers. Five protomers subsequently associate to form pentamers which serve as building blocks for the capsid. As to quaternary structure, interacts with capsid protein VP0 and capsid protein VP1 to form heterotrimeric protomers. Five protomers subsequently associate to form pentamers which serve as building blocks for the capsid. Homohexamer; forms a hexameric ring structure with 6-fold symmetry characteristic of AAA+ ATPases. In terms of assembly, homodimer. Interacts with host ACBD3. As to quaternary structure, interacts with RNA-directed RNA polymerase. Interacts with Viral protein genome-linked. The cofactor is Mg(2+). VPg is uridylylated by the polymerase and is covalently linked to the 5'-end of genomic RNA. This uridylylated form acts as a nucleotide-peptide primer for the polymerase. In terms of processing, specific enzymatic cleavages yield mature proteins. All cleavages are catalyzed by P3C.

It localises to the virion. The protein localises to the host cytoplasm. Its subcellular location is the host nucleus. The protein resides in the host nucleolus. It is found in the host cytoplasmic vesicle membrane. It localises to the host endoplasmic reticulum membrane. The protein localises to the host Golgi apparatus membrane. The catalysed reaction is RNA(n) + a ribonucleoside 5'-triphosphate = RNA(n+1) + diphosphate. It carries out the reaction a ribonucleoside 5'-triphosphate + H2O = a ribonucleoside 5'-diphosphate + phosphate + H(+). The enzyme catalyses Selective cleavage of Gln-|-Gly bond in the poliovirus polyprotein. In other picornavirus reactions Glu may be substituted for Gln, and Ser or Thr for Gly.. Forms an icosahedral capsid of pseudo T=3 symmetry together with capsid proteins VP1 and VP3. The capsid is 300 Angstroms in diameter, composed of 60 copies of each capsid protein and enclosing the viral positive strand RNA genome. The attachment to the host cell receptor induces virion internalization predominantly through clathrin-mediated endocytosis. Binds packaging signals present in the viral RNA. Functionally, forms an icosahedral capsid of pseudo T=3 symmetry together with capsid proteins VP0 and VP1. The capsid is 300 Angstroms in diameter, composed of 60 copies of each capsid protein and enclosing the viral positive strand RNA genome. The attachment to the host cell receptor induces virion internalization predominantly through clathrin-mediated endocytosis. Binds packaging signals present in the viral RNA. In terms of biological role, forms an icosahedral capsid of pseudo T=3 symmetry together with capsid proteins VP0 and VP3. The capsid is 300 Angstroms in diameter, composed of 60 copies of each capsid protein and enclosing the viral positive strand RNA genome. The attachment to the host cell receptor induces virion internalization predominantly through clathrin-mediated endocytosis. Binds packaging signals present in the viral RNA. Its function is as follows. Mediates self-processing of the polyprotein by a translational effect termed 'ribosome skipping'. Mechanistically, 2A1-mediated cleavage occurs between the C-terminal glycine and the proline of the downstream protein 2A2. Plays an essential role in the virus replication cycle by acting as a viroporin. Creates a pore in the host endoplasmic reticulum and as a consequence releases Ca2+ in the cytoplasm of infected cell. In turn, high levels of cytoplasmic calcium may trigger membrane trafficking and transport of viral ER-associated proteins to viroplasms, sites of viral genome replication. Functionally, induces and associates with structural rearrangements of intracellular membranes. Displays RNA-binding, nucleotide binding and NTPase activities. May play a role in virion morphogenesis and viral RNA encapsidation by interacting with the capsid protein VP3. In terms of biological role, localizes the viral replication complex to the surface of membranous vesicles. It inhibits host cell endoplasmic reticulum-to-Golgi apparatus transport and causes the disassembly of the Golgi complex, possibly through GBF1 interaction. This would result in depletion of MHC, trail receptors and IFN receptors at the host cell surface. Plays an essential role in viral RNA replication by recruiting ACBD3 and PI4KB at the viral replication sites, thereby allowing the formation of the rearranged membranous structures where viral replication takes place. Its function is as follows. Acts as a primer for viral RNA replication and remains covalently bound to viral genomic RNA. VPg is uridylylated prior to priming replication into VPg-pUpU. The VPg-pUpU is then used as primer on the genomic RNA poly(A) by the RNA-dependent RNA polymerase to replicate the viral genome. Following genome release from the infecting virion in the cytoplasm, the VPg-RNA linkage is probably removed by host TDP2. During the late stage of the replication cycle, host TDP2 is excluded from sites of viral RNA synthesis and encapsidation, allowing for the generation of progeny virions. Cysteine protease that generates mature viral proteins from the precursor polyprotein. In addition to its proteolytic activity, it binds to viral RNA, and thus influences viral genome replication. RNA and substrate bind cooperatively to the protease. Functionally, replicates the viral genomic RNA on the surface of intracellular membranes. Covalently attaches UMP to a tyrosine of VPg, which is used to prime RNA synthesis. The positive stranded RNA genome is first replicated at virus induced membranous vesicles, creating a dsRNA genomic replication form. This dsRNA is then used as template to synthesize positive stranded RNA genomes. ss(+)RNA genomes are either translated, replicated or encapsidated. This Ljunganvirus 1 (LV) protein is Genome polyprotein.